Consider the following 299-residue polypeptide: Probable tyrosine phosphatase protein J4 (299 aa).

A Tyrosine-protein phosphatase domain is found at 16–289 (VEALDFLSFM…VYCYQALYVW (274 aa)). Cys-230 (phosphocysteine intermediate) is an active-site residue.

The protein belongs to the protein-tyrosine phosphatase family.

The enzyme catalyses O-phospho-L-tyrosyl-[protein] + H2O = L-tyrosyl-[protein] + phosphate. The sequence is that of Probable tyrosine phosphatase protein J4 (J5) from Microplitis demolitor bracovirus (isolate Webb) (MdBV).